The primary structure comprises 550 residues: CTP synthase (550 aa).

The interval 1-270 (MTKFVFVTGG…DRLICEELRL (270 aa)) is amidoligase domain. Serine 13 lines the CTP pocket. Position 13 (serine 13) interacts with UTP. Residues 14–19 (SLGKGI) and aspartate 71 contribute to the ATP site. Mg(2+) is bound by residues aspartate 71 and glutamate 144. CTP is bound by residues 151-153 (DIE), 191-196 (KTKPTQ), and lysine 227. UTP is bound by residues 191–196 (KTKPTQ) and lysine 227. In terms of domain architecture, Glutamine amidotransferase type-1 spans 295 to 547 (TIGMVGKYVD…VEAALAGQQR (253 aa)). Glycine 356 contributes to the L-glutamine binding site. Cysteine 383 serves as the catalytic Nucleophile; for glutamine hydrolysis. L-glutamine-binding positions include 384–387 (LGMQ), glutamate 407, and arginine 473. Residues histidine 520 and glutamate 522 contribute to the active site.

It belongs to the CTP synthase family. In terms of assembly, homotetramer.

It catalyses the reaction UTP + L-glutamine + ATP + H2O = CTP + L-glutamate + ADP + phosphate + 2 H(+). The catalysed reaction is L-glutamine + H2O = L-glutamate + NH4(+). The enzyme catalyses UTP + NH4(+) + ATP = CTP + ADP + phosphate + 2 H(+). Its pathway is pyrimidine metabolism; CTP biosynthesis via de novo pathway; CTP from UDP: step 2/2. With respect to regulation, allosterically activated by GTP, when glutamine is the substrate; GTP has no effect on the reaction when ammonia is the substrate. The allosteric effector GTP functions by stabilizing the protein conformation that binds the tetrahedral intermediate(s) formed during glutamine hydrolysis. Inhibited by the product CTP, via allosteric rather than competitive inhibition. Catalyzes the ATP-dependent amination of UTP to CTP with either L-glutamine or ammonia as the source of nitrogen. Regulates intracellular CTP levels through interactions with the four ribonucleotide triphosphates. This chain is CTP synthase, found in Cupriavidus pinatubonensis (strain JMP 134 / LMG 1197) (Cupriavidus necator (strain JMP 134)).